We begin with the raw amino-acid sequence, 88 residues long: MKSIVYMLLFCTFTVVILGHPNDHGALIPYRAEKLPNGEWCIRPGYSCSERGQCCMPVDGDTYTYGCGRAWSEGSKVCFICNRESSMC.

The first 19 residues, 1–19, serve as a signal peptide directing secretion; the sequence is MKSIVYMLLFCTFTVVILG. Disulfide bonds link Cys41-Cys55, Cys41-Cys78, Cys54-Cys67, and Cys81-Cys88.

The protein belongs to the neurotoxin 27 (Jztx-72) family. ICK-41 subfamily. Expressed by the venom gland.

Its subcellular location is the secreted. Its function is as follows. Probable neurotoxin with ion channel impairing activity. This chain is Toxin ICK-12, found in Trittame loki (Brush-footed trapdoor spider).